Reading from the N-terminus, the 569-residue chain is Proline--tRNA ligase (569 aa).

It belongs to the class-II aminoacyl-tRNA synthetase family. ProS type 1 subfamily. As to quaternary structure, homodimer.

It localises to the cytoplasm. The catalysed reaction is tRNA(Pro) + L-proline + ATP = L-prolyl-tRNA(Pro) + AMP + diphosphate. In terms of biological role, catalyzes the attachment of proline to tRNA(Pro) in a two-step reaction: proline is first activated by ATP to form Pro-AMP and then transferred to the acceptor end of tRNA(Pro). As ProRS can inadvertently accommodate and process non-cognate amino acids such as alanine and cysteine, to avoid such errors it has two additional distinct editing activities against alanine. One activity is designated as 'pretransfer' editing and involves the tRNA(Pro)-independent hydrolysis of activated Ala-AMP. The other activity is designated 'posttransfer' editing and involves deacylation of mischarged Ala-tRNA(Pro). The misacylated Cys-tRNA(Pro) is not edited by ProRS. This chain is Proline--tRNA ligase, found in Campylobacter jejuni (strain RM1221).